Reading from the N-terminus, the 312-residue chain is Gamma-soluble NSF attachment protein (312 aa).

Positions 281–312 are disordered; that stretch reads KKKSPATPQAKPDGAAGMAAEEEEDEYSGGLC. Position 284 is a phosphoserine (S284). T287 is modified (phosphothreonine). The segment covering 300-312 has biased composition (acidic residues); it reads AEEEEDEYSGGLC. S308 carries the phosphoserine modification.

It belongs to the SNAP family. In terms of assembly, interacts with RAB11FIP5. Interacts with VTI1A. As to expression, abundantly expressed in the heart, liver and kidneys with lower expression in the brain, spleen, lung, muscle and testes.

Its subcellular location is the membrane. It localises to the golgi apparatus. In terms of biological role, required for vesicular transport between the endoplasmic reticulum and the Golgi apparatus. The sequence is that of Gamma-soluble NSF attachment protein from Mus musculus (Mouse).